We begin with the raw amino-acid sequence, 128 residues long: uncharacterized protein (128 aa).

The helical transmembrane segment at 8–28 (YQAIYLIFAGFTVFGLLLHFY) threads the bilayer.

The protein localises to the membrane. This is an uncharacterized protein from Haemophilus influenzae (strain ATCC 51907 / DSM 11121 / KW20 / Rd).